The following is a 243-amino-acid chain: MKAVYIIGTDTDVGKTLICAGLCWALKEKGYNIGYFKPVLSGAKRRGKMLIPQDTEFVVNFAKIKGDIYRLTPFIFEKPASPHIAASDENVDINVNQIKQTFEDLSQNYEFVIIEGCGGLAVPLKEERNQFYMQYQLIKEICNNVILVTTTKLGTINHTLLTVEFAKAYGLCLKGIIVNMYKNEPDEDKVINTITKFTNIPILAKVDFINDFPSDVDENKFKNVFKKCFDDRAIRKIMGVFEC.

12–17 lines the ATP pocket; the sequence is DVGKTL. T16 provides a ligand contact to Mg(2+). K37 is an active-site residue. S41 contacts substrate. Residues D54, 115 to 118, and 179 to 180 each bind ATP; these read EGCG and NM. The Mg(2+) site is built by D54 and E115.

This sequence belongs to the dethiobiotin synthetase family. As to quaternary structure, homodimer. The cofactor is Mg(2+).

The protein localises to the cytoplasm. The enzyme catalyses (7R,8S)-7,8-diammoniononanoate + CO2 + ATP = (4R,5S)-dethiobiotin + ADP + phosphate + 3 H(+). It functions in the pathway cofactor biosynthesis; biotin biosynthesis; biotin from 7,8-diaminononanoate: step 1/2. Its function is as follows. Catalyzes a mechanistically unusual reaction, the ATP-dependent insertion of CO2 between the N7 and N8 nitrogen atoms of 7,8-diaminopelargonic acid (DAPA, also called 7,8-diammoniononanoate) to form a ureido ring. The protein is ATP-dependent dethiobiotin synthetase BioD of Caldicellulosiruptor saccharolyticus (strain ATCC 43494 / DSM 8903 / Tp8T 6331).